Here is a 302-residue protein sequence, read N- to C-terminus: MKAPGRLVLIILCSVVFSAVYILLCCWAGLPLCLATCLDHHFPTGSRPTVPGPLHFSGYSSVPDGKPLVREPCRSCAVVSSSGQMLGSGLGAEIDSAECVFRMNQAPTVGFEADVGQRSTLRVVSHTSVPLLLRNYSHYFQKARDTLYMVWGQGRHMDRVLGGRTYRTLLQLTRMYPGLQVYTFTERMMAYCDQIFQDETGKNRRQSGSFLSTGWFTMILALELCEEIVVYGMVSDSYCREKSHPSVPYHYFEKGRLDECQMYLAHEQAPRSAHRFITEKAVFSRWAKKRPIVFAHPSWRTE.

Residues 1–6 lie on the Cytoplasmic side of the membrane; sequence MKAPGR. The chain crosses the membrane as a helical; Signal-anchor for type II membrane protein span at residues 7-27; sequence LVLIILCSVVFSAVYILLCCW. Residues 28–302 are Lumenal-facing; sequence AGLPLCLATC…VFAHPSWRTE (275 aa). C76 and C225 are disulfide-bonded. N-linked (GlcNAc...) asparagine glycosylation is present at N135.

It belongs to the glycosyltransferase 29 family. Ubiquitous.

It localises to the golgi apparatus membrane. It catalyses the reaction an alpha-Neu5Ac-(2-&gt;3)-beta-D-Gal-(1-&gt;3)-D-GlcNAc derivative + CMP-N-acetyl-beta-neuraminate = an alpha-Neu5Ac-(2-&gt;3)-beta-D-Gal-(1-&gt;3)-[alpha-Neu5Ac-(2-&gt;6)]-D-GlcNAc derivative + CMP + H(+). It carries out the reaction N-acetyl-alpha-neuraminosyl-(2-&gt;3)-beta-D-galactosyl-(1-&gt;3)-N-acetyl-D-galactosamine + CMP-N-acetyl-beta-neuraminate = N-acetyl-alpha-neuraminosyl-(2-&gt;3)-beta-D-galactosyl-(1-&gt;3)-[N-acetyl-alpha-neuraminosyl-(2-&gt;6)]-N-acetyl-D-galactosamine + CMP + H(+). The catalysed reaction is a ganglioside GM1b (d18:1(4E)) + CMP-N-acetyl-beta-neuraminate = a ganglioside GD1alpha (d18:1(4E)) + CMP + H(+). The enzyme catalyses 3-O-[alpha-Neu5Ac-(2-&gt;3)-beta-D-Gal-(1-&gt;3)-alpha-D-GalNAc]-L-Ser-[protein] + CMP-N-acetyl-beta-neuraminate = a 3-O-{alpha-Neu5Ac-(2-&gt;3)-beta-D-Gal-(1-&gt;3)-[alpha-Neu5Ac-(2-&gt;6)]-alpha-D-GalNAc}-L-seryl-[protein] + CMP + H(+). It catalyses the reaction 3-O-[alpha-Neu5Ac-(2-&gt;3)-beta-D-Gal-(1-&gt;3)-alpha-D-GalNAc]-L-Thr-[protein] + CMP-N-acetyl-beta-neuraminate = a 3-O-{alpha-Neu5Ac-(2-&gt;3)-beta-D-Gal-(1-&gt;3)-[alpha-Neu5Ac-(2-&gt;6)]-alpha-D-GalNAc}-L-threonyl-[protein] + CMP + H(+). Its pathway is protein modification; protein glycosylation. It functions in the pathway glycolipid biosynthesis. Functionally, transfers the sialyl group (N-acetyl-alpha-neuraminyl or NeuAc) from CMP-NeuAc to the GalNAc residue on the NeuAc-alpha-2,3-Gal-beta-1,3-GalNAc sequence of glycoproteins and glycolipids forming an alpha-2,6-linkage. Produces branched type disialyl structures by transfer of a sialyl group onto a GalNAc residue inside the backbone core chains. Prefers O-glycans to glycoproteins or glycolipids. In Homo sapiens (Human), this protein is Alpha-N-acetyl-neuraminyl-2,3-beta-galactosyl-1,3-N-acetyl-galactosaminide alpha-2,6-sialyltransferase (ST6GALNAC4).